The primary structure comprises 348 residues: S-adenosylmethionine-dependent nucleotide dehydratase RSAD2 (348 aa).

The Radical SAM core domain maps to 56 to 276; sequence SATPSSVNYH…LERHSSISCL (221 aa). Residues Cys-70, Cys-74, and Cys-77 each contribute to the [4Fe-4S] cluster site.

The protein belongs to the radical SAM superfamily. RSAD2 family. The cofactor is [4Fe-4S] cluster. In terms of tissue distribution, expressed at low levels in spleen and head kidney.

The protein localises to the endoplasmic reticulum membrane. In terms of biological role, interferon-inducible iron-sulfur (4FE-4S) cluster-binding antiviral protein which plays a major role in the cell antiviral state induced by type I and type II interferon. This is S-adenosylmethionine-dependent nucleotide dehydratase RSAD2 from Oncorhynchus mykiss (Rainbow trout).